We begin with the raw amino-acid sequence, 290 residues long: Putative speedy protein-like protein 3 (290 aa).

Positions 16–50 (GVDPSPPCRSLGWKRKKEWSDESEEEPEKELAPEP) are disordered. The segment covering 36–50 (DESEEEPEKELAPEP) has biased composition (acidic residues).

Belongs to the Speedy/Ringo family.

The chain is Putative speedy protein-like protein 3 from Homo sapiens (Human).